The sequence spans 367 residues: Glutamate 5-kinase (367 aa).

An ATP-binding site is contributed by Lys9. Positions 49, 136, and 148 each coordinate substrate. Residues 168-169 (TD) and 210-216 (TGGMKSK) contribute to the ATP site. A PUA domain is found at 276–350 (SGQIEIDAGA…GMQSQHIQAR (75 aa)).

The protein belongs to the glutamate 5-kinase family.

It is found in the cytoplasm. It carries out the reaction L-glutamate + ATP = L-glutamyl 5-phosphate + ADP. It participates in amino-acid biosynthesis; L-proline biosynthesis; L-glutamate 5-semialdehyde from L-glutamate: step 1/2. Functionally, catalyzes the transfer of a phosphate group to glutamate to form L-glutamate 5-phosphate. The chain is Glutamate 5-kinase from Bacillus cereus (strain ZK / E33L).